Here is a 247-residue protein sequence, read N- to C-terminus: Protein NipSnap homolog 3B (247 aa).

N6-succinyllysine occurs at positions 45 and 57.

The protein belongs to the NipSnap family.

The chain is Protein NipSnap homolog 3B (NIPSNAP3B) from Homo sapiens (Human).